The chain runs to 206 residues: Dihydrofolate reductase (206 aa).

Residues 6–204 (SLTLIVALTT…FDYEFEMWTR (199 aa)) enclose the DHFR domain. Residues Ala12 and 18 to 24 (GIGRSNS) contribute to the NADP(+) site. A substrate-binding site is contributed by 32–37 (EISYFK). 59–61 (RKT) serves as a coordination point for NADP(+). Arg75 provides a ligand contact to substrate. NADP(+) is bound by residues 81–83 (TRN) and 124–131 (GGAQLYKA).

This sequence belongs to the dihydrofolate reductase family.

It carries out the reaction (6S)-5,6,7,8-tetrahydrofolate + NADP(+) = 7,8-dihydrofolate + NADPH + H(+). Its pathway is cofactor biosynthesis; tetrahydrofolate biosynthesis; 5,6,7,8-tetrahydrofolate from 7,8-dihydrofolate: step 1/1. Key enzyme in folate metabolism. Catalyzes an essential reaction for de novo glycine and purine synthesis, and for DNA precursor synthesis. This chain is Dihydrofolate reductase, found in Pneumocystis carinii.